We begin with the raw amino-acid sequence, 221 residues long: Elongation factor Ts (221 aa).

Positions T82 to V85 are involved in Mg(2+) ion dislocation from EF-Tu.

This sequence belongs to the EF-Ts family.

It localises to the cytoplasm. Associates with the EF-Tu.GDP complex and induces the exchange of GDP to GTP. It remains bound to the aminoacyl-tRNA.EF-Tu.GTP complex up to the GTP hydrolysis stage on the ribosome. The chain is Elongation factor Ts from Synechococcus elongatus (strain ATCC 33912 / PCC 7942 / FACHB-805) (Anacystis nidulans R2).